Here is a 167-residue protein sequence, read N- to C-terminus: NADH-ubiquinone oxidoreductase chain 6 (167 aa).

A run of 4 helical transmembrane segments spans residues 24-44 (PYFGALGLIVVSLVGCLIILA), 54-74 (LLLIYLGGMMVVFSYCTALVL), 85-105 (VLMKMALGVLVVVFLGYGGYL), and 135-155 (WLLIVFGCLGLFLALLVILEI).

This sequence belongs to the complex I subunit 6 family.

It localises to the mitochondrion membrane. The enzyme catalyses a ubiquinone + NADH + 5 H(+)(in) = a ubiquinol + NAD(+) + 4 H(+)(out). Its function is as follows. Core subunit of the mitochondrial membrane respiratory chain NADH dehydrogenase (Complex I) that is believed to belong to the minimal assembly required for catalysis. Complex I functions in the transfer of electrons from NADH to the respiratory chain. The immediate electron acceptor for the enzyme is believed to be ubiquinone. This Myxine glutinosa (Atlantic hagfish) protein is NADH-ubiquinone oxidoreductase chain 6 (MT-ND6).